A 454-amino-acid chain; its full sequence is Mogroside I-E synthase (454 aa).

His-18 serves as the catalytic Proton acceptor. Residue His-18 coordinates an anthocyanidin. The active-site Charge relay is Asp-111. Residue His-144 participates in an anthocyanidin binding. An intrachain disulfide couples Cys-259 to Cys-331. 7 residues coordinate UDP-alpha-D-glucose: Ser-278, Cys-331, Gln-333, Trp-351, Asn-352, Ser-353, and Glu-356. Ala-371 is a binding site for an anthocyanidin. The UDP-alpha-D-glucose site is built by Asp-372 and Gln-373.

It belongs to the UDP-glycosyltransferase family. Highly expressed in young fruits 15 days after anthesis (15-DAA).

The enzyme catalyses mogrol + UDP-alpha-D-glucose = mogroside IE + UDP + H(+). It functions in the pathway secondary metabolite biosynthesis; terpenoid biosynthesis. With respect to regulation, activity is increased by Mg(2+). UDP-glycosyltransferase involved in the biosynthesis of cucurbitacin and mogroside tetracyclic triterpene natural products (e.g. siamenoside I and mogrosides IV, V and VI). Cucurbitacins have cytotoxic properties and exhibit deterrent taste as a defense barrier against herbivores. Mogrosides are nonsugar highly oxygenated compounds used as high-intensity zero-calorie sweeteners; they also possess pharmacological properties such as regulating immunity, lowering blood sugar and lipid levels, protecting the liver, and acting as antioxidants and antitumor agents. Catalyzes the transfer of a glucose moiety to the C-3 hydroxyl of mogrol to form mogroside I-E. Besides mogrol, UGT74AC1 also shows activity in vitro with quercetin and naringenin as substrate. This Siraitia grosvenorii (Monk's fruit) protein is Mogroside I-E synthase.